Reading from the N-terminus, the 530-residue chain is Hyccin 2 (530 aa).

Phosphothreonine is present on residues Thr30 and Thr306. A phosphoserine mark is found at Ser321 and Ser341. Positions 328–410 (RREGAEGVNG…DSVVRKQYVQ (83 aa)) are disordered. Positions 353-373 (SGASLSSQPIGTKPSSSSQRG) are enriched in polar residues. Ser430, Ser442, Ser444, and Ser491 each carry phosphoserine. The segment at 502-530 (EGKELLSPGAPLTKQSRSPSFNMQLISQV) is disordered. Positions 514-530 (TKQSRSPSFNMQLISQV) are enriched in polar residues.

Belongs to the Hyccin family. In terms of assembly, component of a phosphatidylinositol 4-kinase (PI4K) complex, composed of PI4KA, EFR3 (EFR3A or EFR3B), TTC7 (TTC7A or TTC7B) and HYCC (HYCC1 or HYCC2).

It localises to the cytoplasm. The protein localises to the cytosol. Its subcellular location is the cell membrane. Component of a complex required to localize phosphatidylinositol 4-kinase (PI4K) to the plasma membrane. The protein is Hyccin 2 of Homo sapiens (Human).